Here is a 207-residue protein sequence, read N- to C-terminus: Imidazole glycerol phosphate synthase subunit HisH (207 aa).

One can recognise a Glutamine amidotransferase type-1 domain in the interval 1–206; the sequence is MMIVIDYDAG…KEYVYENTAR (206 aa). Cysteine 79 serves as the catalytic Nucleophile. Catalysis depends on residues histidine 181 and glutamate 183.

Heterodimer of HisH and HisF.

The protein localises to the cytoplasm. The catalysed reaction is 5-[(5-phospho-1-deoxy-D-ribulos-1-ylimino)methylamino]-1-(5-phospho-beta-D-ribosyl)imidazole-4-carboxamide + L-glutamine = D-erythro-1-(imidazol-4-yl)glycerol 3-phosphate + 5-amino-1-(5-phospho-beta-D-ribosyl)imidazole-4-carboxamide + L-glutamate + H(+). The enzyme catalyses L-glutamine + H2O = L-glutamate + NH4(+). It participates in amino-acid biosynthesis; L-histidine biosynthesis; L-histidine from 5-phospho-alpha-D-ribose 1-diphosphate: step 5/9. Functionally, IGPS catalyzes the conversion of PRFAR and glutamine to IGP, AICAR and glutamate. The HisH subunit catalyzes the hydrolysis of glutamine to glutamate and ammonia as part of the synthesis of IGP and AICAR. The resulting ammonia molecule is channeled to the active site of HisF. This is Imidazole glycerol phosphate synthase subunit HisH from Streptococcus sanguinis (strain SK36).